The following is a 273-amino-acid chain: Tetraspanin-8 (273 aa).

The Cytoplasmic portion of the chain corresponds to 1–7 (MARCSNN). A helical membrane pass occupies residues 8–28 (LVGILNFLVFLLSIPILAGGI). The Extracellular segment spans residues 29–45 (WLSQKGSTECERFLDKP). The chain crosses the membrane as a helical span at residues 46 to 66 (VIALGVFLMVVAIAGLIGSCC). Residues 67–75 (RVTWLLWVY) lie on the Cytoplasmic side of the membrane. The chain crosses the membrane as a helical span at residues 76–96 (LFVMFLLILLVFCITVFAFVV). Residues 97–235 (TNKGAGEAIE…NVKSAWKKVA (139 aa)) are Extracellular-facing. Asn192 is a glycosylation site (N-linked (GlcNAc...) asparagine). The chain crosses the membrane as a helical span at residues 236 to 256 (IVNIVFLVFLIIVYSVGCCAF). Over 257–273 (RNNKRDDSYSRTYGYKP) the chain is Cytoplasmic.

This sequence belongs to the tetraspanin (TM4SF) family.

Its subcellular location is the membrane. In terms of biological role, may be involved in the regulation of cell differentiation. This chain is Tetraspanin-8 (TET8), found in Arabidopsis thaliana (Mouse-ear cress).